Reading from the N-terminus, the 67-residue chain is Cold shock protein (67 aa).

A CSD domain is found at 4–64; that stretch reads GTVKWFNAEK…GAKGPQATGV (61 aa).

The protein resides in the cytoplasm. This chain is Cold shock protein (csp), found in Arthrobacter globiformis.